The following is a 487-amino-acid chain: Neuronal immunoglobulin domain-containing protein rig-3 (487 aa).

The N-terminal stretch at 1 to 23 (MGRLLAKMLFPLAMCLFVSAVSA) is a signal peptide. 2 Ig-like domains span residues 34–139 (PIVI…KTIK) and 247–354 (PEFE…PKVT). 2 disulfide bridges follow: Cys61/Cys124 and Cys271/Cys327. Residue Asp466 is the site of GPI-anchor amidated aspartate attachment. Residues 467 to 487 (SASDSKFPLALATLFFVCLFI) constitute a propeptide, removed in mature form.

Expressed in the cholinergic motor neurons AS, VA and DA in the ventral nerve cord and in the mechanosensory ALM neurons in the midbody.

It is found in the cell projection. The protein resides in the axon. It localises to the synapse. Its subcellular location is the cell membrane. Cell surface protein which plays a role in the plasticity of cholinergic synapses at neuromuscular junctions and in the polarity of the mechanosensory neuron ALM, possibly by antagonizing Wnt signaling. The chain is Neuronal immunoglobulin domain-containing protein rig-3 from Caenorhabditis elegans.